The following is a 102-amino-acid chain: Large ribosomal subunit protein bL21 (102 aa).

It belongs to the bacterial ribosomal protein bL21 family. In terms of assembly, part of the 50S ribosomal subunit. Contacts protein L20.

This protein binds to 23S rRNA in the presence of protein L20. The polypeptide is Large ribosomal subunit protein bL21 (Leifsonia xyli subsp. xyli (strain CTCB07)).